A 111-amino-acid polypeptide reads, in one-letter code: uncharacterized protein (111 aa).

The tract at residues 43 to 72 (NGRAEETEADAPLPEEPSLPDLPDLSDLDS) is disordered. Residues 61–72 (LPDLPDLSDLDS) are compositionally biased toward low complexity.

This is an uncharacterized protein from Homo sapiens (Human).